Consider the following 214-residue polypeptide: DELTA-actitoxin-Aeq1a (214 aa).

An N-terminal signal peptide occupies residues 1–19; the sequence is MSRLIIVFIVVTMICSATA. A propeptide spanning residues 20 to 35 is cleaved from the precursor; sequence LPSKKIIDEDEEDEKR. Positions 38 to 47 are plays an important role in the hemolytic activity; the sequence is DVAGAVIDGA. The interval 46–65 is N-terminal region; it reads GASLSFDILKTVLEALGNVK. The phosphocholine site is built by serine 89, valine 122, serine 140, proline 142, tyrosine 168, tyrosine 172, and tyrosine 173. The interval 140–155 is trp-rich region, which is important for the binding to lipid membrane; it reads SVPYDYNWYSNWWNVR. A Cell attachment site, crucial for protein stability motif is present at residues 179–181; it reads RGD.

This sequence belongs to the actinoporin family. Sea anemone subfamily. In terms of assembly, octamer or nonamer in membranes. Monomer in the soluble state.

The protein localises to the secreted. Its subcellular location is the nematocyst. It is found in the target cell membrane. Its function is as follows. Pore-forming protein that forms cations-selective hydrophilic pores of around 1 nm and causes cardiac stimulation and cytolysis. Pore formation is a multi-step process that involves specific recognition of membrane sphingomyelin (but neither cholesterol nor phosphatidylcholine) using aromatic rich region and adjacent phosphocholine (POC) binding site, firm binding to the membrane (mainly driven by hydrophobic interactions) accompanied by the transfer of the N-terminal region to the lipid-water interface and finally pore formation after oligomerization of monomers. Cytolytic effects include red blood cells hemolysis, platelet aggregation and lysis, cytotoxic and cytostatic effects on fibroblasts. Lethality in mammals has been ascribed to severe vasospasm of coronary vessels, cardiac arrhythmia, and inotropic effects. This is DELTA-actitoxin-Aeq1a from Actinia equina (Beadlet anemone).